The chain runs to 496 residues: FAD-linked oxidoreductase AFUA_1G00980 (496 aa).

The N-terminal stretch at 1–21 (MRRATLIPLAIWVAGAAAAAA) is a signal peptide. N-linked (GlcNAc...) asparagine glycans are attached at residues Asn49, Asn122, Asn205, Asn258, Asn344, Asn351, Asn371, and Asn382. The region spanning 64–243 (MAPTYAVSVR…VEAVYQVTDL (180 aa)) is the FAD-binding PCMH-type domain.

It belongs to the oxygen-dependent FAD-linked oxidoreductase family. FAD is required as a cofactor.

FAD-linked oxidoreductase; part of the gene cluster that mediates the biosynthesis of fumigermin that inhibits germination of spores of the inducing S.rapamycinicus, and thus helps the fungus to defend resources in the shared habitat against a bacterial competitor. The partially reducing polyketide synthase fngA alone is sufficient for the production of fumigermin. FgnA catalyzes the condensation of 3 malonyl-CoA units to an acetyl-CoA starter, and 3 methylations to yield fumigermin. It is remarkable that the five cluster genes including fgnA are conserved in distantly related fungi, supporting the assumption of a fumigermin cluster; it is thus possible that originally all five genes were functional, but that the genes encoding tailoring enzymes became inactive from mutations, similar to the case of the fgnA gene in strains A1163 and Af293. The polypeptide is FAD-linked oxidoreductase AFUA_1G00980 (Aspergillus fumigatus (strain ATCC MYA-4609 / CBS 101355 / FGSC A1100 / Af293) (Neosartorya fumigata)).